Reading from the N-terminus, the 156-residue chain is ATP synthase subunit b (156 aa).

The helical transmembrane segment at Leu7–Ile29 threads the bilayer.

The protein belongs to the ATPase B chain family. F-type ATPases have 2 components, F(1) - the catalytic core - and F(0) - the membrane proton channel. F(1) has five subunits: alpha(3), beta(3), gamma(1), delta(1), epsilon(1). F(0) has three main subunits: a(1), b(2) and c(10-14). The alpha and beta chains form an alternating ring which encloses part of the gamma chain. F(1) is attached to F(0) by a central stalk formed by the gamma and epsilon chains, while a peripheral stalk is formed by the delta and b chains.

Its subcellular location is the cell inner membrane. Functionally, f(1)F(0) ATP synthase produces ATP from ADP in the presence of a proton or sodium gradient. F-type ATPases consist of two structural domains, F(1) containing the extramembraneous catalytic core and F(0) containing the membrane proton channel, linked together by a central stalk and a peripheral stalk. During catalysis, ATP synthesis in the catalytic domain of F(1) is coupled via a rotary mechanism of the central stalk subunits to proton translocation. Component of the F(0) channel, it forms part of the peripheral stalk, linking F(1) to F(0). The chain is ATP synthase subunit b from Vibrio vulnificus (strain CMCP6).